The following is a 477-amino-acid chain: Ribosomal RNA small subunit methyltransferase F (477 aa).

S-adenosyl-L-methionine contacts are provided by residues 125 to 131 (AAAPGSK), E149, D176, and D194. The Nucleophile role is filled by C247.

The protein belongs to the class I-like SAM-binding methyltransferase superfamily. RsmB/NOP family.

The protein localises to the cytoplasm. It carries out the reaction cytidine(1407) in 16S rRNA + S-adenosyl-L-methionine = 5-methylcytidine(1407) in 16S rRNA + S-adenosyl-L-homocysteine + H(+). Its function is as follows. Specifically methylates the cytosine at position 1407 (m5C1407) of 16S rRNA. This chain is Ribosomal RNA small subunit methyltransferase F, found in Klebsiella pneumoniae (strain 342).